A 318-amino-acid chain; its full sequence is Ribosomal RNA small subunit methyltransferase H (318 aa).

Residues 38 to 40, Asp-57, Leu-91, Asp-105, and Gln-112 contribute to the S-adenosyl-L-methionine site; that span reads AGH.

The protein belongs to the methyltransferase superfamily. RsmH family.

It is found in the cytoplasm. It carries out the reaction cytidine(1402) in 16S rRNA + S-adenosyl-L-methionine = N(4)-methylcytidine(1402) in 16S rRNA + S-adenosyl-L-homocysteine + H(+). Functionally, specifically methylates the N4 position of cytidine in position 1402 (C1402) of 16S rRNA. The protein is Ribosomal RNA small subunit methyltransferase H of Clavibacter michiganensis subsp. michiganensis (strain NCPPB 382).